Reading from the N-terminus, the 805-residue chain is Probable phosphoketolase (805 aa).

This sequence belongs to the XFP family. It depends on thiamine diphosphate as a cofactor.

The protein is Probable phosphoketolase of Synechocystis sp. (strain ATCC 27184 / PCC 6803 / Kazusa).